Reading from the N-terminus, the 151-residue chain is Endoribonuclease YbeY (151 aa).

Residues His114, His118, and His124 each contribute to the Zn(2+) site.

This sequence belongs to the endoribonuclease YbeY family. It depends on Zn(2+) as a cofactor.

The protein localises to the cytoplasm. In terms of biological role, single strand-specific metallo-endoribonuclease involved in late-stage 70S ribosome quality control and in maturation of the 3' terminus of the 16S rRNA. This chain is Endoribonuclease YbeY, found in Hamiltonella defensa subsp. Acyrthosiphon pisum (strain 5AT).